The chain runs to 216 residues: Peroxiredoxin (216 aa).

One can recognise a Thioredoxin domain in the interval 2–158; sequence VVIGEKFPEV…ILRLVKALKI (157 aa). C46 serves as the catalytic Cysteine sulfenic acid (-SOH) intermediate. Residue R121 participates in substrate binding. An intrachain disulfide couples C205 to C211.

The protein belongs to the peroxiredoxin family. Prx6 subfamily. Homodecamer. Pentamer of dimers that assemble into a ring structure.

The protein localises to the cytoplasm. The catalysed reaction is a hydroperoxide + [thioredoxin]-dithiol = an alcohol + [thioredoxin]-disulfide + H2O. Thiol-specific peroxidase that catalyzes the reduction of hydrogen peroxide and organic hydroperoxides to water and alcohols, respectively. Plays a role in cell protection against oxidative stress by detoxifying peroxides. This chain is Peroxiredoxin, found in Pyrococcus abyssi (strain GE5 / Orsay).